The sequence spans 115 residues: Large ribosomal subunit protein bL20 (115 aa).

It belongs to the bacterial ribosomal protein bL20 family.

Functionally, binds directly to 23S ribosomal RNA and is necessary for the in vitro assembly process of the 50S ribosomal subunit. It is not involved in the protein synthesizing functions of that subunit. In Borrelia hermsii (strain HS1 / DAH), this protein is Large ribosomal subunit protein bL20.